We begin with the raw amino-acid sequence, 312 residues long: DNA-directed RNA polymerase subunit alpha (312 aa).

The segment at 1 to 226 (MIEFEKPNIT…EHFKVFMSTD (226 aa)) is alpha N-terminal domain (alpha-NTD). The interval 243–312 (NEKKLEMTIE…ELGLSLRQDD (70 aa)) is alpha C-terminal domain (alpha-CTD).

The protein belongs to the RNA polymerase alpha chain family. In terms of assembly, homodimer. The RNAP catalytic core consists of 2 alpha, 1 beta, 1 beta' and 1 omega subunit. When a sigma factor is associated with the core the holoenzyme is formed, which can initiate transcription.

It catalyses the reaction RNA(n) + a ribonucleoside 5'-triphosphate = RNA(n+1) + diphosphate. In terms of biological role, DNA-dependent RNA polymerase catalyzes the transcription of DNA into RNA using the four ribonucleoside triphosphates as substrates. The polypeptide is DNA-directed RNA polymerase subunit alpha (Lactobacillus gasseri (strain ATCC 33323 / DSM 20243 / BCRC 14619 / CIP 102991 / JCM 1131 / KCTC 3163 / NCIMB 11718 / NCTC 13722 / AM63)).